A 77-amino-acid chain; its full sequence is MWHLKLCAVLMIFLLLLGQTDGSPIPEVSSAKRRPRRMTPFWRGVSLRPIGASCRDDSECITRLCRKRRCSLSVAQE.

The N-terminal stretch at 1 to 22 (MWHLKLCAVLMIFLLLLGQTDG) is a signal peptide. Residues 23–37 (SPIPEVSSAKRRPRR) constitute a propeptide that is removed on maturation. Disulfide bonds link Cys-54–Cys-65 and Cys-60–Cys-70.

This sequence belongs to the LEAP2 family.

The protein resides in the secreted. Its function is as follows. Has an antimicrobial activity. This is Liver-expressed antimicrobial peptide 2 (LEAP2) from Macaca mulatta (Rhesus macaque).